A 398-amino-acid polypeptide reads, in one-letter code: Polyferredoxin protein VhuB (398 aa).

4Fe-4S ferredoxin-type domains are found at residues 2 to 31 (AGIK…IAPF), 25 to 53 (AIEI…VENN), 54 to 83 (GKLI…VDDR), 82 to 111 (DRFP…IPGK), 123 to 152 (QEPI…IEDE), 152 to 181 (ELAV…VAGK), 191 to 219 (KSFT…YNRE), 220 to 249 (DLIV…LEVE), 259 to 291 (EGLV…MINQ), 300 to 331 (TKTD…MGKI), and 339 to 368 (NRIE…LTGD). Cysteine 11, cysteine 14, cysteine 17, cysteine 21, cysteine 34, cysteine 37, cysteine 40, cysteine 44, cysteine 63, cysteine 66, cysteine 69, cysteine 73, cysteine 91, cysteine 94, cysteine 97, cysteine 101, cysteine 132, cysteine 135, cysteine 138, cysteine 142, cysteine 161, cysteine 164, cysteine 167, cysteine 171, cysteine 199, cysteine 202, cysteine 205, cysteine 209, cysteine 229, cysteine 232, cysteine 235, cysteine 239, cysteine 268, cysteine 271, cysteine 274, cysteine 278, cysteine 311, cysteine 314, cysteine 317, cysteine 321, cysteine 348, cysteine 351, cysteine 354, cysteine 358, cysteine 377, cysteine 380, cysteine 383, and cysteine 387 together coordinate [4Fe-4S] cluster.

The cofactor is [4Fe-4S] cluster.

This Methanococcus voltae protein is Polyferredoxin protein VhuB (vhuB).